The sequence spans 515 residues: ATP synthase subunit alpha (515 aa).

169 to 176 (GDRQTGKT) contributes to the ATP binding site.

It belongs to the ATPase alpha/beta chains family. F-type ATPases have 2 components, CF(1) - the catalytic core - and CF(0) - the membrane proton channel. CF(1) has five subunits: alpha(3), beta(3), gamma(1), delta(1), epsilon(1). CF(0) has three main subunits: a(1), b(2) and c(9-12). The alpha and beta chains form an alternating ring which encloses part of the gamma chain. CF(1) is attached to CF(0) by a central stalk formed by the gamma and epsilon chains, while a peripheral stalk is formed by the delta and b chains.

Its subcellular location is the cell inner membrane. It carries out the reaction ATP + H2O + 4 H(+)(in) = ADP + phosphate + 5 H(+)(out). Functionally, produces ATP from ADP in the presence of a proton gradient across the membrane. The alpha chain is a regulatory subunit. This is ATP synthase subunit alpha from Neisseria meningitidis serogroup A / serotype 4A (strain DSM 15465 / Z2491).